A 259-amino-acid chain; its full sequence is Type III pantothenate kinase (259 aa).

6-13 (DIGNTNIT) lines the ATP pocket. 113-116 (GADR) lines the substrate pocket. The Proton acceptor role is filled by D115. D135 is a K(+) binding site. ATP is bound at residue T138. T190 contributes to the substrate binding site.

Belongs to the type III pantothenate kinase family. As to quaternary structure, homodimer. The cofactor is NH4(+). It depends on K(+) as a cofactor.

The protein resides in the cytoplasm. The enzyme catalyses (R)-pantothenate + ATP = (R)-4'-phosphopantothenate + ADP + H(+). It functions in the pathway cofactor biosynthesis; coenzyme A biosynthesis; CoA from (R)-pantothenate: step 1/5. Functionally, catalyzes the phosphorylation of pantothenate (Pan), the first step in CoA biosynthesis. This is Type III pantothenate kinase from Endomicrobium trichonymphae.